The sequence spans 436 residues: Protein TolB homolog (436 aa).

Residues 1–27 (MRHSIRLTAALLLAFIACFSFPLSAMA) form the signal peptide.

It belongs to the TolB family.

The protein localises to the periplasm. The protein is Protein TolB homolog of Chlorobium luteolum (strain DSM 273 / BCRC 81028 / 2530) (Pelodictyon luteolum).